Here is a 359-residue protein sequence, read N- to C-terminus: DNA integrity scanning protein DisA (359 aa).

Positions 7–145 (DDIFRATLAA…AGRRYVLDGA (139 aa)) constitute a DAC domain. Residues G74, L92, and 105 to 109 (TRHRT) contribute to the ATP site.

It belongs to the DisA family. As to quaternary structure, homooctamer. Requires Mg(2+) as cofactor.

It catalyses the reaction 2 ATP = 3',3'-c-di-AMP + 2 diphosphate. Its function is as follows. Participates in a DNA-damage check-point that is active prior to asymmetric division when DNA is damaged. DisA forms globular foci that rapidly scan along the chromosomes during sporulation, searching for lesions. When a lesion is present, DisA pauses at the lesion site. This triggers a cellular response that culminates in a temporary block in sporulation initiation. In terms of biological role, also has diadenylate cyclase activity, catalyzing the condensation of 2 ATP molecules into cyclic di-AMP (c-di-AMP). c-di-AMP acts as a signaling molecule that couples DNA integrity with progression of sporulation. The rise in c-di-AMP level generated by DisA while scanning the chromosome, operates as a positive signal that advances sporulation; upon encountering a lesion, the DisA focus arrests at the damaged site and halts c-di-AMP synthesis. The protein is DNA integrity scanning protein DisA of Parafrankia sp. (strain EAN1pec).